The chain runs to 115 residues: Promotilin (115 aa).

Residues 1 to 25 form the signal peptide; the sequence is MVSRKAVAALLVVHAPAMLASQTEA. The interval 40 to 74 is disordered; the sequence is EKERSKGQKKSLSVWQRSGEEGPVDPAEPIEEEGN.

Belongs to the motilin family.

The protein resides in the secreted. Functionally, plays an important role in the regulation of interdigestive gastrointestinal motility and indirectly causes rhythmic contraction of duodenal and colonic smooth muscle. The polypeptide is Promotilin (MLN) (Macaca mulatta (Rhesus macaque)).